The primary structure comprises 476 residues: Cysteine--tRNA ligase (476 aa).

Zn(2+) is bound at residue C31. The 'HIGH' region signature appears at 33–43; that stretch reads PTVYNYAHIGN. The Zn(2+) site is built by C211, H236, and E240. The 'KMSKS' region motif lies at 269 to 273; sequence KMSKS. Residue K272 participates in ATP binding.

Belongs to the class-I aminoacyl-tRNA synthetase family. In terms of assembly, monomer. Requires Zn(2+) as cofactor.

The protein localises to the cytoplasm. It carries out the reaction tRNA(Cys) + L-cysteine + ATP = L-cysteinyl-tRNA(Cys) + AMP + diphosphate. In Xanthomonas euvesicatoria pv. vesicatoria (strain 85-10) (Xanthomonas campestris pv. vesicatoria), this protein is Cysteine--tRNA ligase.